Consider the following 391-residue polypeptide: Phosphoglycerate kinase (391 aa).

Residues 21 to 23, arginine 36, 59 to 62, arginine 113, and arginine 146 contribute to the substrate site; these read DLN and HLGR. ATP contacts are provided by residues lysine 197, glutamate 319, and 345 to 348; that span reads GGDT.

The protein belongs to the phosphoglycerate kinase family. As to quaternary structure, monomer.

The protein resides in the cytoplasm. The enzyme catalyses (2R)-3-phosphoglycerate + ATP = (2R)-3-phospho-glyceroyl phosphate + ADP. It functions in the pathway carbohydrate degradation; glycolysis; pyruvate from D-glyceraldehyde 3-phosphate: step 2/5. The sequence is that of Phosphoglycerate kinase from Shewanella woodyi (strain ATCC 51908 / MS32).